The chain runs to 450 residues: Phosphoglucosamine mutase (450 aa).

Ser103 serves as the catalytic Phosphoserine intermediate. Mg(2+) contacts are provided by Ser103, Asp243, Asp245, and Asp247. Phosphoserine is present on Ser103.

This sequence belongs to the phosphohexose mutase family. It depends on Mg(2+) as a cofactor. In terms of processing, activated by phosphorylation.

The catalysed reaction is alpha-D-glucosamine 1-phosphate = D-glucosamine 6-phosphate. Its function is as follows. Catalyzes the conversion of glucosamine-6-phosphate to glucosamine-1-phosphate. The chain is Phosphoglucosamine mutase from Lactobacillus delbrueckii subsp. bulgaricus (strain ATCC BAA-365 / Lb-18).